Reading from the N-terminus, the 1098-residue chain is Trehalose synthase complex regulatory subunit TSL1 (1098 aa).

Phosphoserine is present on residues serine 49, serine 53, serine 56, serine 71, serine 77, serine 135, serine 147, and serine 161. 3 disordered regions span residues 59-86 (APAP…RASS), 129-168 (SVER…QQQQ), and 192-244 (SQTS…PSIK). Positions 72–86 (RSATRSPSAFNRASS) are enriched in polar residues. Tandem repeats lie at residues 144–150 (RIASPIQ) and 158–164 (RIASPIQ). Positions 144–164 (RIASPIQHEHDSGSRIASPIQ) are 2 X 7 AA repeats of R-I-A-S-P-I-Q. Positions 213–227 (RPTSAATSLVNRTKQ) are enriched in polar residues. Residues 228 to 242 (GSASSGSSGSSAPPS) are compositionally biased toward low complexity. Serine 229 carries the post-translational modification Phosphoserine. Threonine 251 bears the Phosphothreonine mark. A disordered region spans residues 274-297 (ADISSSETSSQHNESDPDDLTTAP). The residue at position 303 (serine 303) is a Phosphoserine. A TPS complex domain region spans residues 320–812 (GGYSNKSKLK…FNQEGSKIFK (493 aa)). A Phosphothreonine modification is found at threonine 815. The disordered stretch occupies residues 1000–1027 (SSGQITNIQTPSQQNPSDQEQQPPASPT).

In the C-terminal section; belongs to the glycosyltransferase 20 family. The trehalose synthase complex is composed of the two catalytic subunits TPS1 and TPS2, and at least one of the two regulatory subunits TPS3 or TSL1.

It localises to the cytoplasm. In terms of biological role, regulatory subunit of the trehalose synthase complex that catalyzes the production of trehalose from glucose-6-phosphate and UDP-glucose in a two step process. May stabilize the trehalose synthase complex, and confer sensitivity to physiological concentrations of phosphate and to fructose 6-phosphate. This chain is Trehalose synthase complex regulatory subunit TSL1 (TSL1), found in Saccharomyces cerevisiae (strain ATCC 204508 / S288c) (Baker's yeast).